A 124-amino-acid chain; its full sequence is UPF0375 protein Y45F10C.4 (124 aa).

The first 23 residues, 1 to 23 (MNFLPSTVLLLSFVVAIISGSFS), serve as a signal peptide directing secretion. N-linked (GlcNAc...) asparagine glycosylation is found at Asn36 and Asn62.

Belongs to the UPF0375 family.

The protein resides in the secreted. This is UPF0375 protein Y45F10C.4 from Caenorhabditis elegans.